Reading from the N-terminus, the 155-residue chain is Phosphoprotein pp24 (155 aa).

The tract at residues 1–50 (MEFEAEHEGLTASWVAPAPQGGKGAEGRAGVADEAGHGKTEAECAEDGEK) is disordered. Basic and acidic residues predominate over residues 34 to 50 (EAGHGKTEAECAEDGEK). The stretch at 76-107 (RKRIEAKYMDLLVEAERENKNLRKKYNIILDV) forms a coiled coil.

In Gallus gallus (Chicken), this protein is Phosphoprotein pp24 (MDV008).